The sequence spans 190 residues: Ribosome maturation factor RimM (190 aa).

In terms of domain architecture, PRC barrel spans 95–171; sequence DPDEFYDHEL…VVMIEPPEGL (77 aa). The tract at residues 169 to 190 is disordered; the sequence is EGLLDPDFGDKSNSDNSNSDND.

The protein belongs to the RimM family. As to quaternary structure, binds ribosomal protein uS19.

It localises to the cytoplasm. In terms of biological role, an accessory protein needed during the final step in the assembly of 30S ribosomal subunit, possibly for assembly of the head region. Essential for efficient processing of 16S rRNA. May be needed both before and after RbfA during the maturation of 16S rRNA. It has affinity for free ribosomal 30S subunits but not for 70S ribosomes. The polypeptide is Ribosome maturation factor RimM (Rhodococcus erythropolis (strain PR4 / NBRC 100887)).